The following is a 469-amino-acid chain: ATP synthase subunit beta (469 aa).

Residue 153 to 160 coordinates ATP; sequence GGAGVGKT.

The protein belongs to the ATPase alpha/beta chains family. F-type ATPases have 2 components, CF(1) - the catalytic core - and CF(0) - the membrane proton channel. CF(1) has five subunits: alpha(3), beta(3), gamma(1), delta(1), epsilon(1). CF(0) has three main subunits: a(1), b(2) and c(9-12). The alpha and beta chains form an alternating ring which encloses part of the gamma chain. CF(1) is attached to CF(0) by a central stalk formed by the gamma and epsilon chains, while a peripheral stalk is formed by the delta and b chains.

Its subcellular location is the cell inner membrane. It catalyses the reaction ATP + H2O + 4 H(+)(in) = ADP + phosphate + 5 H(+)(out). In terms of biological role, produces ATP from ADP in the presence of a proton gradient across the membrane. The catalytic sites are hosted primarily by the beta subunits. This chain is ATP synthase subunit beta, found in Pseudothermotoga lettingae (strain ATCC BAA-301 / DSM 14385 / NBRC 107922 / TMO) (Thermotoga lettingae).